The chain runs to 281 residues: Nucleotide-binding protein CTN_0898 (281 aa).

9-16 (GLSGAGKT) contacts ATP. 58-61 (DVRS) is a binding site for GTP.

Belongs to the RapZ-like family.

Displays ATPase and GTPase activities. The polypeptide is Nucleotide-binding protein CTN_0898 (Thermotoga neapolitana (strain ATCC 49049 / DSM 4359 / NBRC 107923 / NS-E)).